The sequence spans 498 residues: ATP synthase subunit beta, chloroplastic (498 aa).

Gly-172–Thr-179 serves as a coordination point for ATP.

Belongs to the ATPase alpha/beta chains family. As to quaternary structure, F-type ATPases have 2 components, CF(1) - the catalytic core - and CF(0) - the membrane proton channel. CF(1) has five subunits: alpha(3), beta(3), gamma(1), delta(1), epsilon(1). CF(0) has four main subunits: a(1), b(1), b'(1) and c(9-12).

It is found in the plastid. It localises to the chloroplast thylakoid membrane. It carries out the reaction ATP + H2O + 4 H(+)(in) = ADP + phosphate + 5 H(+)(out). Functionally, produces ATP from ADP in the presence of a proton gradient across the membrane. The catalytic sites are hosted primarily by the beta subunits. This is ATP synthase subunit beta, chloroplastic from Solanum lycopersicum (Tomato).